The primary structure comprises 269 residues: 4-hydroxy-tetrahydrodipicolinate reductase (269 aa).

NAD(+) is bound by residues 8 to 13, E34, 98 to 100, and 122 to 125; these read GASGRM, GTT, and APNM. H155 acts as the Proton donor/acceptor in catalysis. A (S)-2,3,4,5-tetrahydrodipicolinate-binding site is contributed by H156. The active-site Proton donor is the K159. A (S)-2,3,4,5-tetrahydrodipicolinate-binding site is contributed by 165–166; that stretch reads GT.

It belongs to the DapB family.

Its subcellular location is the cytoplasm. The catalysed reaction is (S)-2,3,4,5-tetrahydrodipicolinate + NAD(+) + H2O = (2S,4S)-4-hydroxy-2,3,4,5-tetrahydrodipicolinate + NADH + H(+). It carries out the reaction (S)-2,3,4,5-tetrahydrodipicolinate + NADP(+) + H2O = (2S,4S)-4-hydroxy-2,3,4,5-tetrahydrodipicolinate + NADPH + H(+). It functions in the pathway amino-acid biosynthesis; L-lysine biosynthesis via DAP pathway; (S)-tetrahydrodipicolinate from L-aspartate: step 4/4. Its function is as follows. Catalyzes the conversion of 4-hydroxy-tetrahydrodipicolinate (HTPA) to tetrahydrodipicolinate. This is 4-hydroxy-tetrahydrodipicolinate reductase from Desulfotalea psychrophila (strain LSv54 / DSM 12343).